We begin with the raw amino-acid sequence, 460 residues long: Adenylosuccinate lyase (460 aa).

N(6)-(1,2-dicarboxyethyl)-AMP is bound by residues 15–16, 88–90, and 120–121; these read RY, NHD, and TS. His169 (proton donor/acceptor) is an active-site residue. Gln245 provides a ligand contact to N(6)-(1,2-dicarboxyethyl)-AMP. Ser293 acts as the Proton donor/acceptor in catalysis. Residues Ser294, 299 to 301, Asn307, Arg333, and 338 to 342 each bind N(6)-(1,2-dicarboxyethyl)-AMP; these read KIN and STVLR.

It belongs to the lyase 1 family. Adenylosuccinate lyase subfamily. As to quaternary structure, homotetramer. Residues from neighboring subunits contribute catalytic and substrate-binding residues to each active site.

The enzyme catalyses N(6)-(1,2-dicarboxyethyl)-AMP = fumarate + AMP. The catalysed reaction is (2S)-2-[5-amino-1-(5-phospho-beta-D-ribosyl)imidazole-4-carboxamido]succinate = 5-amino-1-(5-phospho-beta-D-ribosyl)imidazole-4-carboxamide + fumarate. The protein operates within purine metabolism; AMP biosynthesis via de novo pathway; AMP from IMP: step 2/2. Its pathway is purine metabolism; IMP biosynthesis via de novo pathway; 5-amino-1-(5-phospho-D-ribosyl)imidazole-4-carboxamide from 5-amino-1-(5-phospho-D-ribosyl)imidazole-4-carboxylate: step 2/2. In terms of biological role, catalyzes two reactions in de novo purine nucleotide biosynthesis. Catalyzes the breakdown of 5-aminoimidazole- (N-succinylocarboxamide) ribotide (SAICAR or 2-[5-amino-1-(5-phospho-beta-D-ribosyl)imidazole-4-carboxamido]succinate) to 5-aminoimidazole-4-carboxamide ribotide (AICAR or 5-amino-1-(5-phospho-beta-D-ribosyl)imidazole-4-carboxamide) and fumarate, and of adenylosuccinate (ADS or N(6)-(1,2-dicarboxyethyl)-AMP) to adenosine monophosphate (AMP) and fumarate. The protein is Adenylosuccinate lyase (purB) of Buchnera aphidicola subsp. Baizongia pistaciae (strain Bp).